Consider the following 148-residue polypeptide: MIIANNKKAFFDYFIEEKYEAGIELKGSEVKSIKAGKVSIKEAFVRIINDEIFIMGMSVVPWEFGSVYNPEERRVRKLLLHRKEIKKIHEKVKIKGYTIVPLDVHLSKGYVKMQIAIAKGKKTYDKRESIAKKDQERNLKREFKNNNR.

The interval 128–148 is disordered; that stretch reads ESIAKKDQERNLKREFKNNNR.

This sequence belongs to the SmpB family.

The protein localises to the cytoplasm. Required for rescue of stalled ribosomes mediated by trans-translation. Binds to transfer-messenger RNA (tmRNA), required for stable association of tmRNA with ribosomes. tmRNA and SmpB together mimic tRNA shape, replacing the anticodon stem-loop with SmpB. tmRNA is encoded by the ssrA gene; the 2 termini fold to resemble tRNA(Ala) and it encodes a 'tag peptide', a short internal open reading frame. During trans-translation Ala-aminoacylated tmRNA acts like a tRNA, entering the A-site of stalled ribosomes, displacing the stalled mRNA. The ribosome then switches to translate the ORF on the tmRNA; the nascent peptide is terminated with the 'tag peptide' encoded by the tmRNA and targeted for degradation. The ribosome is freed to recommence translation, which seems to be the essential function of trans-translation. This is SsrA-binding protein from Fusobacterium nucleatum subsp. nucleatum (strain ATCC 25586 / DSM 15643 / BCRC 10681 / CIP 101130 / JCM 8532 / KCTC 2640 / LMG 13131 / VPI 4355).